The primary structure comprises 475 residues: Ataxin-10 (475 aa).

R10 bears the Omega-N-methylarginine mark. Phosphoserine occurs at positions 12 and 77. T82 carries the post-translational modification Phosphothreonine. S430 carries the post-translational modification Phosphoserine.

It belongs to the ataxin-10 family. In terms of assembly, homooligomer. Interacts with GNB2. Interacts with IQCB1. Interacts with OGT. In terms of processing, polyubiquitinated. Phosphorylation at Ser-12 by AURKB promotes the association of ATXN10 with PLK1. Phosphorylation at Ser-77 and Thr-82 by PLK1 may play a role in the regulation of cytokinesis and may stimulate the proteasome-mediated degradation of ATXN10.

It is found in the cytoplasm. The protein localises to the perinuclear region. The protein resides in the cytoskeleton. It localises to the cilium basal body. Its subcellular location is the microtubule organizing center. It is found in the centrosome. The protein localises to the centriole. The protein resides in the midbody. May play a role in the regulation of cytokinesis. May play a role in signaling by stimulating protein glycosylation. Induces neuritogenesis by activating the Ras-MAP kinase pathway and is necessary for the survival of cerebellar neurons. Does not appear to play a major role in ciliogenesis. This Bos taurus (Bovine) protein is Ataxin-10 (ATXN10).